The primary structure comprises 258 residues: Tryptophan synthase alpha chain (258 aa).

Residues E44 and D55 each act as proton acceptor in the active site.

The protein belongs to the TrpA family. Tetramer of two alpha and two beta chains.

The enzyme catalyses (1S,2R)-1-C-(indol-3-yl)glycerol 3-phosphate + L-serine = D-glyceraldehyde 3-phosphate + L-tryptophan + H2O. It functions in the pathway amino-acid biosynthesis; L-tryptophan biosynthesis; L-tryptophan from chorismate: step 5/5. Functionally, the alpha subunit is responsible for the aldol cleavage of indoleglycerol phosphate to indole and glyceraldehyde 3-phosphate. The sequence is that of Tryptophan synthase alpha chain from Petrotoga mobilis (strain DSM 10674 / SJ95).